Reading from the N-terminus, the 156-residue chain is rRNA methyltransferase (156 aa).

In terms of biological role, modifies 16S rRNA so making ribosomes resistant to certain aminoglycosides. The sequence is that of rRNA methyltransferase (kamC) from Saccharopolyspora hirsuta.